A 287-amino-acid polypeptide reads, in one-letter code: Pantothenate synthetase (287 aa).

30 to 37 serves as a coordination point for ATP; it reads MGNLHDGH. The active-site Proton donor is the His37. Gln61 serves as a coordination point for (R)-pantoate. Residue Gln61 coordinates beta-alanine. 148-151 provides a ligand contact to ATP; the sequence is GQKD. Residue Gln154 coordinates (R)-pantoate. ATP is bound by residues Ile177 and 185 to 188; that span reads LSSR.

The protein belongs to the pantothenate synthetase family. In terms of assembly, homodimer.

It is found in the cytoplasm. The catalysed reaction is (R)-pantoate + beta-alanine + ATP = (R)-pantothenate + AMP + diphosphate + H(+). The protein operates within cofactor biosynthesis; (R)-pantothenate biosynthesis; (R)-pantothenate from (R)-pantoate and beta-alanine: step 1/1. Its function is as follows. Catalyzes the condensation of pantoate with beta-alanine in an ATP-dependent reaction via a pantoyl-adenylate intermediate. In Psychrobacter cryohalolentis (strain ATCC BAA-1226 / DSM 17306 / VKM B-2378 / K5), this protein is Pantothenate synthetase.